Reading from the N-terminus, the 303-residue chain is D-alanine--D-alanine ligase (303 aa).

An ATP-grasp domain is found at 99 to 293; sequence TYRFLKGTVE…FEELVEIILK (195 aa). Residue 125-176 participates in ATP binding; the sequence is GYPCVVKPRREGSSIGVFVCESDEEFQHALKEDLPRYGSVIVQKYIPGREMT. Asp-248, Glu-260, and Asn-262 together coordinate Mg(2+).

Belongs to the D-alanine--D-alanine ligase family. Mg(2+) is required as a cofactor. It depends on Mn(2+) as a cofactor.

The protein resides in the cytoplasm. It carries out the reaction 2 D-alanine + ATP = D-alanyl-D-alanine + ADP + phosphate + H(+). The protein operates within cell wall biogenesis; peptidoglycan biosynthesis. Cell wall formation. In Thermotoga maritima (strain ATCC 43589 / DSM 3109 / JCM 10099 / NBRC 100826 / MSB8), this protein is D-alanine--D-alanine ligase.